Reading from the N-terminus, the 307-residue chain is Oxygen-dependent coproporphyrinogen-III oxidase (307 aa).

Position 94 (S94) interacts with substrate. Residues H98 and H108 each coordinate a divalent metal cation. H108 serves as the catalytic Proton donor. 110–112 (NVR) contributes to the substrate binding site. A divalent metal cation-binding residues include H147 and H177. Residues 242-277 (YVEFNLVWDRGTLFGLQSGGRTESILMSMPPLAQWQ) form an important for dimerization region. 260 to 262 (GGR) contacts substrate.

The protein belongs to the aerobic coproporphyrinogen-III oxidase family. As to quaternary structure, homodimer. The cofactor is a divalent metal cation.

It is found in the cytoplasm. It catalyses the reaction coproporphyrinogen III + O2 + 2 H(+) = protoporphyrinogen IX + 2 CO2 + 2 H2O. It participates in porphyrin-containing compound metabolism; protoporphyrin-IX biosynthesis; protoporphyrinogen-IX from coproporphyrinogen-III (O2 route): step 1/1. Involved in the heme biosynthesis. Catalyzes the aerobic oxidative decarboxylation of propionate groups of rings A and B of coproporphyrinogen-III to yield the vinyl groups in protoporphyrinogen-IX. In Chromohalobacter salexigens (strain ATCC BAA-138 / DSM 3043 / CIP 106854 / NCIMB 13768 / 1H11), this protein is Oxygen-dependent coproporphyrinogen-III oxidase.